The following is a 546-amino-acid chain: Chaperonin GroEL (546 aa).

ATP contacts are provided by residues 29–32, Lys-50, 86–90, Gly-414, and Asp-492; these read TMGP and DGTTT.

This sequence belongs to the chaperonin (HSP60) family. As to quaternary structure, forms a cylinder of 14 subunits composed of two heptameric rings stacked back-to-back. Interacts with the co-chaperonin GroES.

It is found in the cytoplasm. It carries out the reaction ATP + H2O + a folded polypeptide = ADP + phosphate + an unfolded polypeptide.. Together with its co-chaperonin GroES, plays an essential role in assisting protein folding. The GroEL-GroES system forms a nano-cage that allows encapsulation of the non-native substrate proteins and provides a physical environment optimized to promote and accelerate protein folding. This chain is Chaperonin GroEL, found in Helicobacter pylori (strain G27).